Reading from the N-terminus, the 513-residue chain is Histidine--tRNA ligase (513 aa).

The transit peptide at 1–24 (MADKAQLQEAIKTQGEVVRKLKSE) directs the protein to the mitochondrion. The WHEP-TRS domain occupies 3–59 (DKAQLQEAIKTQGEVVRKLKSEKASKEQIDEEVARLLQLKAQLGGDEGKHVFVLKTA). L-histidine-binding positions include 130 to 132 (DLT), Arg157, Gln173, Asp177, Arg326, and 330 to 331 (YY).

Belongs to the class-II aminoacyl-tRNA synthetase family.

The protein resides in the cytoplasm. The protein localises to the mitochondrion. It carries out the reaction tRNA(His) + L-histidine + ATP = L-histidyl-tRNA(His) + AMP + diphosphate + H(+). Functionally, catalyzes the aminoacylation of histidyl-tRNA. In Danio rerio (Zebrafish), this protein is Histidine--tRNA ligase.